A 413-amino-acid polypeptide reads, in one-letter code: Putative F-box protein At3g23970 (413 aa).

The 42-residue stretch at 1–42 (MNIPPELTFEVLVRLPLKSLARFRSVRKEWKLVIDSEFFRDC) folds into the F-box domain.

This is Putative F-box protein At3g23970 from Arabidopsis thaliana (Mouse-ear cress).